Consider the following 175-residue polypeptide: Crossover junction endodeoxyribonuclease RuvC (175 aa).

Residues Asp16, Glu76, and Asp148 contribute to the active site. Mg(2+)-binding residues include Asp16, Glu76, and Asp148.

It belongs to the RuvC family. As to quaternary structure, homodimer which binds Holliday junction (HJ) DNA. The HJ becomes 2-fold symmetrical on binding to RuvC with unstacked arms; it has a different conformation from HJ DNA in complex with RuvA. In the full resolvosome a probable DNA-RuvA(4)-RuvB(12)-RuvC(2) complex forms which resolves the HJ. It depends on Mg(2+) as a cofactor.

The protein resides in the cytoplasm. The catalysed reaction is Endonucleolytic cleavage at a junction such as a reciprocal single-stranded crossover between two homologous DNA duplexes (Holliday junction).. In terms of biological role, the RuvA-RuvB-RuvC complex processes Holliday junction (HJ) DNA during genetic recombination and DNA repair. Endonuclease that resolves HJ intermediates. Cleaves cruciform DNA by making single-stranded nicks across the HJ at symmetrical positions within the homologous arms, yielding a 5'-phosphate and a 3'-hydroxyl group; requires a central core of homology in the junction. The consensus cleavage sequence is 5'-(A/T)TT(C/G)-3'. Cleavage occurs on the 3'-side of the TT dinucleotide at the point of strand exchange. HJ branch migration catalyzed by RuvA-RuvB allows RuvC to scan DNA until it finds its consensus sequence, where it cleaves and resolves the cruciform DNA. The chain is Crossover junction endodeoxyribonuclease RuvC from Bradyrhizobium diazoefficiens (strain JCM 10833 / BCRC 13528 / IAM 13628 / NBRC 14792 / USDA 110).